The sequence spans 154 residues: Iron-sulfur cluster assembly 2 homolog, mitochondrial (154 aa).

The N-terminal 8 residues, 1–8 (MAAAWGSS), are a transit peptide targeting the mitochondrion. Positions 29 to 49 (SLGPQARREASSSSPEAGEGQ) are disordered. A compositionally biased stretch (low complexity) spans 39–49 (SSSSPEAGEGQ). Fe cation contacts are provided by cysteine 79, cysteine 144, and cysteine 146.

This sequence belongs to the HesB/IscA family. In terms of assembly, heterotetramer; forms a dimer of dimers with IBA57. Interacts with [2Fe-2S]-ISCA2 forming the heterodimer [2Fe- 2S]-ISCA2-IBA57 complex; [2Fe-2S] cluster binding is absolutely required to promote the complex formation.

The protein localises to the mitochondrion. Functionally, involved in the maturation of mitochondrial 4Fe-4S proteins functioning late in the iron-sulfur cluster assembly pathway. May be involved in the binding of an intermediate of Fe/S cluster assembly. The chain is Iron-sulfur cluster assembly 2 homolog, mitochondrial (ISCA2) from Homo sapiens (Human).